Consider the following 415-residue polypeptide: Beta-1,4-glucuronyltransferase 1 (415 aa).

Residues 1-8 are Cytoplasmic-facing; that stretch reads MQMSYAIR. Residues 9–36 form a helical; Signal-anchor for type II membrane protein membrane-spanning segment; sequence CAFYQLLLAALMLVAMLQLLYLSLLSGL. Residues 37-415 are Lumenal-facing; sequence HGQEEQDQYF…AKYPNSPRRC (379 aa). Asn204 carries N-linked (GlcNAc...) asparagine glycosylation. Positions 227 and 229 each coordinate Mn(2+). A glycan (N-linked (GlcNAc...) asparagine) is linked at Asn300.

The protein belongs to the glycosyltransferase 49 family. As to quaternary structure, interacts with LARGE1 and LARGE2. Mn(2+) serves as cofactor.

It localises to the golgi apparatus membrane. It catalyses the reaction 3-O-[beta-D-Xyl-(1-&gt;4)-Rib-ol-P-Rib-ol-P-3-beta-D-GalNAc-(1-&gt;3)-beta-D-GlcNAc-(1-&gt;4)-(O-6-P-alpha-D-Man)]-Thr-[protein] + UDP-alpha-D-glucuronate = 3-O-[beta-D-GlcA-(1-&gt;3)-beta-D-Xyl-(1-&gt;4)-Rib-ol-P-Rib-ol-P-3-beta-D-GalNAc-(1-&gt;3)-beta-D-GlcNAc-(1-&gt;4)-(O-6-P-alpha-D-Man)]-Thr-[protein] + UDP + H(+). It participates in protein modification; protein glycosylation. Its function is as follows. Beta-1,4-glucuronyltransferase involved in O-mannosylation of alpha-dystroglycan (DAG1). Transfers a glucuronic acid (GlcA) residue onto a xylose (Xyl) acceptor to produce the glucuronyl-beta-1,4-xylose-beta disaccharide primer, which is further elongated by LARGE1, during synthesis of phosphorylated O-mannosyl glycan. Phosphorylated O-mannosyl glycan is a carbohydrate structure present in alpha-dystroglycan (DAG1), which is required for binding laminin G-like domain-containing extracellular proteins with high affinity. Required for axon guidance; via its function in O-mannosylation of alpha-dystroglycan (DAG1). This Pongo abelii (Sumatran orangutan) protein is Beta-1,4-glucuronyltransferase 1.